We begin with the raw amino-acid sequence, 392 residues long: Queuine tRNA-ribosyltransferase (392 aa).

Catalysis depends on aspartate 93, which acts as the Proton acceptor. Residues 93-97 (DSGGY), aspartate 147, glutamine 189, and glycine 216 contribute to the substrate site. Positions 247 to 253 (GVGAPED) are RNA binding. Aspartate 266 serves as the catalytic Nucleophile. The segment at 271-275 (TRVAR) is RNA binding; important for wobble base 34 recognition. Residues cysteine 304, cysteine 306, cysteine 309, and histidine 335 each contribute to the Zn(2+) site.

Belongs to the queuine tRNA-ribosyltransferase family. Homodimer. Within each dimer, one monomer is responsible for RNA recognition and catalysis, while the other monomer binds to the replacement base PreQ1. It depends on Zn(2+) as a cofactor.

The enzyme catalyses 7-aminomethyl-7-carbaguanine + guanosine(34) in tRNA = 7-aminomethyl-7-carbaguanosine(34) in tRNA + guanine. It participates in tRNA modification; tRNA-queuosine biosynthesis. Functionally, catalyzes the base-exchange of a guanine (G) residue with the queuine precursor 7-aminomethyl-7-deazaguanine (PreQ1) at position 34 (anticodon wobble position) in tRNAs with GU(N) anticodons (tRNA-Asp, -Asn, -His and -Tyr). Catalysis occurs through a double-displacement mechanism. The nucleophile active site attacks the C1' of nucleotide 34 to detach the guanine base from the RNA, forming a covalent enzyme-RNA intermediate. The proton acceptor active site deprotonates the incoming PreQ1, allowing a nucleophilic attack on the C1' of the ribose to form the product. After dissociation, two additional enzymatic reactions on the tRNA convert PreQ1 to queuine (Q), resulting in the hypermodified nucleoside queuosine (7-(((4,5-cis-dihydroxy-2-cyclopenten-1-yl)amino)methyl)-7-deazaguanosine). The chain is Queuine tRNA-ribosyltransferase from Dehalococcoides mccartyi (strain CBDB1).